Reading from the N-terminus, the 228-residue chain is Small ribosomal subunit protein uS3 (228 aa).

Residues 39–107 (VREYLQDKLK…PVHINIEEIR (69 aa)) enclose the KH type-2 domain.

This sequence belongs to the universal ribosomal protein uS3 family. In terms of assembly, part of the 30S ribosomal subunit. Forms a tight complex with proteins S10 and S14.

Binds the lower part of the 30S subunit head. Binds mRNA in the 70S ribosome, positioning it for translation. This is Small ribosomal subunit protein uS3 from Pseudomonas fluorescens (strain ATCC BAA-477 / NRRL B-23932 / Pf-5).